The sequence spans 332 residues: Glycerol-3-phosphate dehydrogenase [NAD(P)+] (332 aa).

NADPH contacts are provided by Ser-14, Trp-15, Arg-35, and Lys-107. Residues Lys-107, Gly-137, and Ser-139 each contribute to the sn-glycerol 3-phosphate site. Ala-141 lines the NADPH pocket. Lys-192, Asp-245, Ser-255, Arg-256, and Asn-257 together coordinate sn-glycerol 3-phosphate. Lys-192 (proton acceptor) is an active-site residue. Residue Arg-256 coordinates NADPH. NADPH is bound by residues Val-280 and Glu-282.

The protein belongs to the NAD-dependent glycerol-3-phosphate dehydrogenase family.

The protein localises to the cytoplasm. The enzyme catalyses sn-glycerol 3-phosphate + NAD(+) = dihydroxyacetone phosphate + NADH + H(+). It carries out the reaction sn-glycerol 3-phosphate + NADP(+) = dihydroxyacetone phosphate + NADPH + H(+). Its pathway is membrane lipid metabolism; glycerophospholipid metabolism. In terms of biological role, catalyzes the reduction of the glycolytic intermediate dihydroxyacetone phosphate (DHAP) to sn-glycerol 3-phosphate (G3P), the key precursor for phospholipid synthesis. This chain is Glycerol-3-phosphate dehydrogenase [NAD(P)+], found in Desulfovibrio desulfuricans (strain ATCC 27774 / DSM 6949 / MB).